A 50-amino-acid chain; its full sequence is Inter-alpha-trypsin inhibitor heavy chain H2 (50 aa).

The protein belongs to the ITIH family. I-alpha-I plasma protease inhibitors are assembled from one or two heavy chains (HC) and one light chain, bikunin. Inter-alpha-inhibitor (I-alpha-I) is composed of ITIH1/HC1, ITIH2/HC2 and bikunin. Phosphorylated by FAM20C in the extracellular medium.

It is found in the secreted. In terms of biological role, may act as a carrier of hyaluronan in serum or as a binding protein between hyaluronan and other matrix protein, including those on cell surfaces in tissues to regulate the localization, synthesis and degradation of hyaluronan which are essential to cells undergoing biological processes. This is Inter-alpha-trypsin inhibitor heavy chain H2 (ITIH2) from Bos taurus (Bovine).